The sequence spans 120 residues: Phosphoribosyl-ATP pyrophosphatase (120 aa).

The segment at 97–120 is disordered; the sequence is REGTSGLVEKASRPAKKDSGTADS. Residues 106-120 are compositionally biased toward basic and acidic residues; that stretch reads KASRPAKKDSGTADS.

The protein belongs to the PRA-PH family.

The protein resides in the cytoplasm. The enzyme catalyses 1-(5-phospho-beta-D-ribosyl)-ATP + H2O = 1-(5-phospho-beta-D-ribosyl)-5'-AMP + diphosphate + H(+). Its pathway is amino-acid biosynthesis; L-histidine biosynthesis; L-histidine from 5-phospho-alpha-D-ribose 1-diphosphate: step 2/9. In Rhodopirellula baltica (strain DSM 10527 / NCIMB 13988 / SH1), this protein is Phosphoribosyl-ATP pyrophosphatase.